The sequence spans 590 residues: MKDKAAATMEIPEDPGIPKNLERKRPIVWRMIYYSFAVLLLAAFTAAYVTEFQILTHEDVLFSLGLYGLVMFLHLMMQSLFAYLEIRRINKTDLPCSFKKTVALTIAGYQENPDYLKHCLDSCRYVKYPKDKLKIILVIDGNTEDDAYMMEMFKDVFHGDDVGTYVWKGNYHTGVKETQDGSCPEVSKPLNEDEGIRIVEELVRTKRCVCIMQQWGGKREVMYTAFRAIGTTMDYVQVCDSDTKLDELATVEMVKVLEANELCGAVGGDVRILNPYDSFISFMSSLRYWMAFNVERACQSYFDCVSCISGPLGMYRNDILQVFLEAWHSQKFLGTYCTLGDDRHLTNRVLSMGYRTKYTPKCRAFSETPSQYLRWLNQQTRWTKSYFREWLYNAQWWYKHHIWMTYESVVHFIFPFFITATVIRLLYASTIWNVVWLLLCIQIMSVLKSLYACWLRGNPIMLLMSLYSMLYMTGLLPSKYFAMLTINKSGWGTSGRKKIVGNYMPVLPLSIWMAVLCGGVGYSIYMDCHQDWSTPEKQKELYHLLYGCISYTLYWVLMALMYWVWVKRCCRKRSQTVTLVHDIPERLVCK.

Topologically, residues 1–31 are cytoplasmic; that stretch reads MKDKAAATMEIPEDPGIPKNLERKRPIVWRM. The helical transmembrane segment at 32 to 52 threads the bilayer; it reads IYYSFAVLLLAAFTAAYVTEF. At 53 to 60 the chain is on the extracellular side; the sequence is QILTHEDV. The helical transmembrane segment at 61-81 threads the bilayer; sequence LFSLGLYGLVMFLHLMMQSLF. Residues 82 to 401 are Cytoplasmic-facing; the sequence is AYLEIRRINK…YNAQWWYKHH (320 aa). The helical transmembrane segment at 402-422 threads the bilayer; it reads IWMTYESVVHFIFPFFITATV. The Extracellular segment spans residues 423–425; the sequence is IRL. A helical membrane pass occupies residues 426–446; the sequence is LYASTIWNVVWLLLCIQIMSV. Residues 447 to 456 are Cytoplasmic-facing; it reads LKSLYACWLR. Residues 457–477 form a helical membrane-spanning segment; it reads GNPIMLLMSLYSMLYMTGLLP. The Extracellular segment spans residues 478–505; sequence SKYFAMLTINKSGWGTSGRKKIVGNYMP. The chain crosses the membrane as a helical span at residues 506 to 526; that stretch reads VLPLSIWMAVLCGGVGYSIYM. Over 527 to 543 the chain is Cytoplasmic; it reads DCHQDWSTPEKQKELYH. A helical transmembrane segment spans residues 544–564; that stretch reads LLYGCISYTLYWVLMALMYWV. The Extracellular segment spans residues 565–588; the sequence is WVKRCCRKRSQTVTLVHDIPERLV.

This sequence belongs to the NodC/HAS family. Requires Mg(2+) as cofactor.

The protein localises to the membrane. It carries out the reaction [hyaluronan](n) + UDP-N-acetyl-alpha-D-glucosamine = N-acetyl-beta-D-glucosaminyl-(1-&gt;4)-[hyaluronan](n) + UDP + H(+). The catalysed reaction is N-acetyl-beta-D-glucosaminyl-(1-&gt;4)-[hyaluronan](n) + UDP-alpha-D-glucuronate = [hyaluronan](n+1) + UDP + H(+). It participates in glycan biosynthesis; hyaluronan biosynthesis. Functionally, catalyzes the addition of GlcNAc or GlcUA monosaccharides to the nascent hyaluronan polymer. Therefore, it is essential to hyaluronan synthesis a major component of most extracellular matrices that has a structural role in tissues architectures and regulates cell adhesion, migration and differentiation. Also able to catalyze the synthesis of chito-oligosaccharide depending on the substrate. The protein is Hyaluronan synthase 1 (has1) of Xenopus tropicalis (Western clawed frog).